We begin with the raw amino-acid sequence, 434 residues long: RHOMBOID-like protein 9, chloroplastic (434 aa).

A chloroplast-targeting transit peptide spans 1-68; that stretch reads MALFPLHHEV…SPRRRLCLVR (68 aa). The next 8 helical transmembrane spans lie at 182-202, 209-229, 238-258, 267-287, 289-309, 326-346, 352-372, and 399-419; these read FYAV…EAAA, MGLL…ILAG, MFLH…LTFG, LFTF…MSFL, TADP…AWLV, LFQK…FGPI, LGAL…LQLG, and FLLF…IGDG.

The protein belongs to the peptidase S54 family.

It is found in the plastid. The protein resides in the chloroplast membrane. Functionally, probable rhomboid-type serine protease that catalyzes intramembrane proteolysis. In Arabidopsis thaliana (Mouse-ear cress), this protein is RHOMBOID-like protein 9, chloroplastic.